The chain runs to 148 residues: Thiol-disulfide oxidoreductase YkuV (148 aa).

Residues 2 to 145 enclose the Thioredoxin domain; that stretch reads KLRQPMPELT…LEKRVNRVLA (144 aa). Residues Cys-41 and Cys-44 are joined by a disulfide bond.

In terms of assembly, monomer.

It localises to the cytoplasm. In terms of biological role, participates in various redox reactions through the reversible oxidation of its active center dithiol to a disulfide and catalyzes dithiol-disulfide exchange reactions. This is Thiol-disulfide oxidoreductase YkuV (ykuV) from Bacillus subtilis (strain 168).